Reading from the N-terminus, the 328-residue chain is GTP 3',8-cyclase (328 aa).

The region spanning 1 to 229 (MNTVDYLRIS…ESFVPGNGPA (229 aa)) is the Radical SAM core domain. Arginine 8 contacts GTP. 2 residues coordinate [4Fe-4S] cluster: cysteine 15 and cysteine 19. S-adenosyl-L-methionine is bound at residue tyrosine 21. Cysteine 22 is a binding site for [4Fe-4S] cluster. Arginine 60 serves as a coordination point for GTP. Position 64 (glycine 64) interacts with S-adenosyl-L-methionine. Residue threonine 91 coordinates GTP. Serine 115 contacts S-adenosyl-L-methionine. Residue lysine 155 participates in GTP binding. Methionine 189 provides a ligand contact to S-adenosyl-L-methionine. The [4Fe-4S] cluster site is built by cysteine 252 and cysteine 255. A GTP-binding site is contributed by 257–259 (RMR). Residue cysteine 269 coordinates [4Fe-4S] cluster.

It belongs to the radical SAM superfamily. MoaA family. In terms of assembly, monomer and homodimer. It depends on [4Fe-4S] cluster as a cofactor.

It carries out the reaction GTP + AH2 + S-adenosyl-L-methionine = (8S)-3',8-cyclo-7,8-dihydroguanosine 5'-triphosphate + 5'-deoxyadenosine + L-methionine + A + H(+). The protein operates within cofactor biosynthesis; molybdopterin biosynthesis. In terms of biological role, catalyzes the cyclization of GTP to (8S)-3',8-cyclo-7,8-dihydroguanosine 5'-triphosphate. This Trichodesmium erythraeum (strain IMS101) protein is GTP 3',8-cyclase.